The primary structure comprises 1207 residues: DNA-directed RNA polymerase subunit beta' (1207 aa).

Residues cysteine 60, cysteine 62, cysteine 75, and cysteine 78 each contribute to the Zn(2+) site. The Mg(2+) site is built by aspartate 449, aspartate 451, and aspartate 453. Zn(2+) contacts are provided by cysteine 822, cysteine 896, cysteine 903, and cysteine 906.

Belongs to the RNA polymerase beta' chain family. In terms of assembly, the RNAP catalytic core consists of 2 alpha, 1 beta, 1 beta' and 1 omega subunit. When a sigma factor is associated with the core the holoenzyme is formed, which can initiate transcription. Mg(2+) serves as cofactor. Requires Zn(2+) as cofactor.

The enzyme catalyses RNA(n) + a ribonucleoside 5'-triphosphate = RNA(n+1) + diphosphate. In terms of biological role, DNA-dependent RNA polymerase catalyzes the transcription of DNA into RNA using the four ribonucleoside triphosphates as substrates. In Staphylococcus saprophyticus subsp. saprophyticus (strain ATCC 15305 / DSM 20229 / NCIMB 8711 / NCTC 7292 / S-41), this protein is DNA-directed RNA polymerase subunit beta'.